A 144-amino-acid polypeptide reads, in one-letter code: Large ribosomal subunit protein uL15 (144 aa).

The tract at residues 1 to 56 (MELNNLKPAEGAKHAKRRVGRGIGSGLGKTAGRGHKGQKSRSGGFHKVGFEGGQMP) is disordered. Over residues 21-31 (RGIGSGLGKTA) the composition is skewed to gly residues.

It belongs to the universal ribosomal protein uL15 family. As to quaternary structure, part of the 50S ribosomal subunit.

Functionally, binds to the 23S rRNA. This chain is Large ribosomal subunit protein uL15, found in Burkholderia mallei (strain NCTC 10247).